Here is a 398-residue protein sequence, read N- to C-terminus: Tryptophan synthase beta chain (398 aa).

Lys88 is subject to N6-(pyridoxal phosphate)lysine.

Belongs to the TrpB family. Tetramer of two alpha and two beta chains. Pyridoxal 5'-phosphate is required as a cofactor.

It catalyses the reaction (1S,2R)-1-C-(indol-3-yl)glycerol 3-phosphate + L-serine = D-glyceraldehyde 3-phosphate + L-tryptophan + H2O. Its pathway is amino-acid biosynthesis; L-tryptophan biosynthesis; L-tryptophan from chorismate: step 5/5. Its function is as follows. The beta subunit is responsible for the synthesis of L-tryptophan from indole and L-serine. This is Tryptophan synthase beta chain from Actinobacillus succinogenes (strain ATCC 55618 / DSM 22257 / CCUG 43843 / 130Z).